A 350-amino-acid polypeptide reads, in one-letter code: GTPase Obg (350 aa).

An Obg domain is found at Met1–Ile158. The OBG-type G domain maps to Ala159–Lys339. GTP-binding positions include Gly165 to Ser172, Phe190 to Thr194, Asp212 to Gly215, Ser280 to Asp283, and Ser320 to Leu322. Ser172 and Thr192 together coordinate Mg(2+).

It belongs to the TRAFAC class OBG-HflX-like GTPase superfamily. OBG GTPase family. Monomer. Requires Mg(2+) as cofactor.

Its subcellular location is the cytoplasm. An essential GTPase which binds GTP, GDP and possibly (p)ppGpp with moderate affinity, with high nucleotide exchange rates and a fairly low GTP hydrolysis rate. Plays a role in control of the cell cycle, stress response, ribosome biogenesis and in those bacteria that undergo differentiation, in morphogenesis control. The sequence is that of GTPase Obg from Campylobacter jejuni subsp. jejuni serotype O:2 (strain ATCC 700819 / NCTC 11168).